The primary structure comprises 354 residues: Tryptophan--tRNA ligase (354 aa).

ATP contacts are provided by residues 13-15 (QPT) and 21-22 (GN). A 'HIGH' region motif is present at residues 14-22 (PTGNLHLGN). Residue aspartate 137 coordinates L-tryptophan. ATP contacts are provided by residues 149 to 151 (GDD), valine 208, and 217 to 221 (KMSKS). The short motif at 217–221 (KMSKS) is the 'KMSKS' region element.

Belongs to the class-I aminoacyl-tRNA synthetase family. As to quaternary structure, homodimer.

Its subcellular location is the cytoplasm. The catalysed reaction is tRNA(Trp) + L-tryptophan + ATP = L-tryptophyl-tRNA(Trp) + AMP + diphosphate + H(+). Its function is as follows. Catalyzes the attachment of tryptophan to tRNA(Trp). The chain is Tryptophan--tRNA ligase from Agrobacterium fabrum (strain C58 / ATCC 33970) (Agrobacterium tumefaciens (strain C58)).